A 72-amino-acid chain; its full sequence is Mu-like prophage FluMu protein C (72 aa).

A DNA-binding region (H-T-H motif) is located at residues 35–55 (NVPDLIKKYRLSESTIYAILR).

This sequence belongs to the c/mor transcriptional regulatory family.

Required for transcription of the phage late genes. The sequence is that of Mu-like prophage FluMu protein C from Haemophilus influenzae (strain ATCC 51907 / DSM 11121 / KW20 / Rd).